We begin with the raw amino-acid sequence, 56 residues long: UPF0291 protein Clos_1191 (56 aa).

The protein belongs to the UPF0291 family.

It is found in the cytoplasm. The polypeptide is UPF0291 protein Clos_1191 (Alkaliphilus oremlandii (strain OhILAs) (Clostridium oremlandii (strain OhILAs))).